A 103-amino-acid chain; its full sequence is Small ribosomal subunit protein uS10 (103 aa).

It belongs to the universal ribosomal protein uS10 family. Part of the 30S ribosomal subunit.

Its function is as follows. Involved in the binding of tRNA to the ribosomes. The protein is Small ribosomal subunit protein uS10 of Pseudomonas savastanoi pv. phaseolicola (strain 1448A / Race 6) (Pseudomonas syringae pv. phaseolicola (strain 1448A / Race 6)).